The following is a 428-amino-acid chain: G2/mitotic-specific cyclin-B (428 aa).

The protein belongs to the cyclin family. Cyclin AB subfamily. As to quaternary structure, interacts with the CDC2 protein kinase to form a serine/threonine kinase holoenzyme complex also known as maturation promoting factor (MPF). The cyclin subunit imparts substrate specificity to the complex.

Functionally, essential for the control of the cell cycle at the G2/M (mitosis) transition. The chain is G2/mitotic-specific cyclin-B from Spisula solidissima (Atlantic surf-clam).